The sequence spans 428 residues: Serine--tRNA ligase (428 aa).

235-237 is an L-serine binding site; the sequence is TAE. 266-268 is an ATP binding site; sequence RSE. E289 serves as a coordination point for L-serine. 353 to 356 lines the ATP pocket; the sequence is EISS. S389 is a binding site for L-serine.

This sequence belongs to the class-II aminoacyl-tRNA synthetase family. Type-1 seryl-tRNA synthetase subfamily. As to quaternary structure, homodimer. The tRNA molecule binds across the dimer.

It localises to the cytoplasm. The enzyme catalyses tRNA(Ser) + L-serine + ATP = L-seryl-tRNA(Ser) + AMP + diphosphate + H(+). It carries out the reaction tRNA(Sec) + L-serine + ATP = L-seryl-tRNA(Sec) + AMP + diphosphate + H(+). Its pathway is aminoacyl-tRNA biosynthesis; selenocysteinyl-tRNA(Sec) biosynthesis; L-seryl-tRNA(Sec) from L-serine and tRNA(Sec): step 1/1. Catalyzes the attachment of serine to tRNA(Ser). Is also able to aminoacylate tRNA(Sec) with serine, to form the misacylated tRNA L-seryl-tRNA(Sec), which will be further converted into selenocysteinyl-tRNA(Sec). This is Serine--tRNA ligase from Pasteurella multocida (strain Pm70).